The following is a 306-amino-acid chain: N-acetylmuramic acid 6-phosphate etherase (306 aa).

Residues 59–222 form the SIS domain; the sequence is TAQALGRGGR…STGVMVCLGK (164 aa). Glu-87 serves as the catalytic Proton donor. Glu-118 is a catalytic residue.

It belongs to the GCKR-like family. MurNAc-6-P etherase subfamily. Homodimer.

It catalyses the reaction N-acetyl-D-muramate 6-phosphate + H2O = N-acetyl-D-glucosamine 6-phosphate + (R)-lactate. It functions in the pathway amino-sugar metabolism; N-acetylmuramate degradation. Functionally, specifically catalyzes the cleavage of the D-lactyl ether substituent of MurNAc 6-phosphate, producing GlcNAc 6-phosphate and D-lactate. The chain is N-acetylmuramic acid 6-phosphate etherase from Rippkaea orientalis (strain PCC 8801 / RF-1) (Cyanothece sp. (strain PCC 8801)).